The primary structure comprises 434 residues: Serine hydroxymethyltransferase (434 aa).

(6S)-5,6,7,8-tetrahydrofolate-binding positions include leucine 133 and 137-139 (GHL). Lysine 242 is subject to N6-(pyridoxal phosphate)lysine.

It belongs to the SHMT family. Homodimer. It depends on pyridoxal 5'-phosphate as a cofactor.

The protein resides in the cytoplasm. It catalyses the reaction (6R)-5,10-methylene-5,6,7,8-tetrahydrofolate + glycine + H2O = (6S)-5,6,7,8-tetrahydrofolate + L-serine. It participates in one-carbon metabolism; tetrahydrofolate interconversion. It functions in the pathway amino-acid biosynthesis; glycine biosynthesis; glycine from L-serine: step 1/1. In terms of biological role, catalyzes the reversible interconversion of serine and glycine with tetrahydrofolate (THF) serving as the one-carbon carrier. This reaction serves as the major source of one-carbon groups required for the biosynthesis of purines, thymidylate, methionine, and other important biomolecules. Also exhibits THF-independent aldolase activity toward beta-hydroxyamino acids, producing glycine and aldehydes, via a retro-aldol mechanism. The sequence is that of Serine hydroxymethyltransferase from Methylorubrum populi (strain ATCC BAA-705 / NCIMB 13946 / BJ001) (Methylobacterium populi).